A 119-amino-acid polypeptide reads, in one-letter code: Integration host factor subunit beta (119 aa).

Residues 91–119 (DLVGNDQGDDSSNGSSDPLQSVMDMHAMH) form a disordered region. Low complexity predominate over residues 94-107 (GNDQGDDSSNGSSD).

Belongs to the bacterial histone-like protein family. As to quaternary structure, heterodimer of an alpha and a beta chain.

Functionally, this protein is one of the two subunits of integration host factor, a specific DNA-binding protein that functions in genetic recombination as well as in transcriptional and translational control. This chain is Integration host factor subunit beta, found in Bordetella parapertussis (strain 12822 / ATCC BAA-587 / NCTC 13253).